The primary structure comprises 575 residues: V-type ATP synthase alpha chain (575 aa).

Gly-238 to Thr-245 contacts ATP.

This sequence belongs to the ATPase alpha/beta chains family.

It carries out the reaction ATP + H2O + 4 H(+)(in) = ADP + phosphate + 5 H(+)(out). Functionally, produces ATP from ADP in the presence of a proton gradient across the membrane. The V-type alpha chain is a catalytic subunit. The chain is V-type ATP synthase alpha chain (atpA) from Borreliella burgdorferi (strain ATCC 35210 / DSM 4680 / CIP 102532 / B31) (Borrelia burgdorferi).